The following is a 50-amino-acid chain: Large ribosomal subunit protein bL33A (50 aa).

This sequence belongs to the bacterial ribosomal protein bL33 family.

The chain is Large ribosomal subunit protein bL33A (rpmG1) from Mycoplasmopsis pulmonis (strain UAB CTIP) (Mycoplasma pulmonis).